The chain runs to 402 residues: Putative polyketide beta-ketoacyl synthase 2 (402 aa).

Disordered regions lie at residues 1–30 (MTPV…WAPR) and 188–222 (VEPR…FDRD). Residues 1 to 400 (MTPVAVTGMG…GFNSALVVRA (400 aa)) form the Ketosynthase family 3 (KS3) domain. Residues 192-205 (SAPGAGSPSSPAGG) are compositionally biased toward low complexity.

The protein belongs to the thiolase-like superfamily. Beta-ketoacyl-ACP synthases family.

Its pathway is antifungal biosynthesis; monensin biosynthesis. The polypeptide is Putative polyketide beta-ketoacyl synthase 2 (Streptomyces virginiae (Streptomyces cinnamonensis)).